A 160-amino-acid chain; its full sequence is Phosphopantetheine adenylyltransferase (160 aa).

Residue threonine 9 participates in substrate binding. ATP contacts are provided by residues 9–10 and histidine 17; that span reads TF. Substrate-binding residues include lysine 41, leucine 73, and arginine 87. Residues 88–90, glutamate 98, and 123–129 each bind ATP; these read GLR and FSYTSSS.

It belongs to the bacterial CoaD family. As to quaternary structure, homohexamer. Requires Mg(2+) as cofactor.

Its subcellular location is the cytoplasm. The enzyme catalyses (R)-4'-phosphopantetheine + ATP + H(+) = 3'-dephospho-CoA + diphosphate. It functions in the pathway cofactor biosynthesis; coenzyme A biosynthesis; CoA from (R)-pantothenate: step 4/5. Its function is as follows. Reversibly transfers an adenylyl group from ATP to 4'-phosphopantetheine, yielding dephospho-CoA (dPCoA) and pyrophosphate. This chain is Phosphopantetheine adenylyltransferase, found in Opitutus terrae (strain DSM 11246 / JCM 15787 / PB90-1).